The primary structure comprises 265 residues: Type III pantothenate kinase (265 aa).

6 to 13 (DVGNTHTV) provides a ligand contact to ATP. Residue 112 to 115 (GADR) participates in substrate binding. Residue Asp-114 is the Proton acceptor of the active site. K(+) is bound at residue Asp-134. Thr-137 is an ATP binding site. Thr-189 is a substrate binding site.

This sequence belongs to the type III pantothenate kinase family. Homodimer. Requires NH4(+) as cofactor. It depends on K(+) as a cofactor.

It localises to the cytoplasm. The catalysed reaction is (R)-pantothenate + ATP = (R)-4'-phosphopantothenate + ADP + H(+). Its pathway is cofactor biosynthesis; coenzyme A biosynthesis; CoA from (R)-pantothenate: step 1/5. In terms of biological role, catalyzes the phosphorylation of pantothenate (Pan), the first step in CoA biosynthesis. The polypeptide is Type III pantothenate kinase (Streptomyces avermitilis (strain ATCC 31267 / DSM 46492 / JCM 5070 / NBRC 14893 / NCIMB 12804 / NRRL 8165 / MA-4680)).